The primary structure comprises 607 residues: ATP-dependent DNA helicase II subunit 1 (607 aa).

In terms of domain architecture, Ku spans 241-452; sequence MDLGNDVRIG…IETMQRILRG (212 aa). In terms of domain architecture, SAP spans 570 to 604; it reads IKALKVSQLKDILRDRGLRVSGKKADLLDNLTNYV.

This sequence belongs to the ku70 family. As to quaternary structure, heterodimer of pku70 and pku80.

It localises to the nucleus. It is found in the chromosome. Its subcellular location is the telomere. The enzyme catalyses ATP + H2O = ADP + phosphate + H(+). Functionally, single-stranded DNA-dependent ATP-dependent helicase. Involved in non-homologous end joining (NHEJ) DNA double strand break repair. DNA-binding is sequence-independent but has a high affinity to nicks in double-stranded DNA and to the ends of duplex DNA. Binds to naturally occurring chromosomal ends, and therefore provides chromosomal end protection. Required also for telomere recombination to repair telomeric ends in the absence of telomerase. ku70, of the ku70/ku80 heterodimer, binds to the stem loop of tlc1, the RNA component of telomerase. Required for mating-type switching. Involved in telomere maintenance. Interacts with telomeric repeats and subtelomeric sequences thereby controlling telomere length and protecting against subtelomeric rearrangement. Maintains telomeric chromatin, which is involved in silencing the expression of genes located at the telomere. The polypeptide is ATP-dependent DNA helicase II subunit 1 (pku70) (Schizosaccharomyces pombe (strain 972 / ATCC 24843) (Fission yeast)).